Here is a 422-residue protein sequence, read N- to C-terminus: MGTRPCAGVASAVAAAVAVLLLAVSCFAAAATTTQKHGRMSGKGGDVLEDDPTGKLKVFVYEMPRKYNLNLLAKDSRCLQHMFAAEIFMHQFLLSSPVRTLDPEEADWFYTPAYTTCDLTPQGFPLPFRAPRIMRSAVRYVAATWPYWNRTDGADHFFLAPHDFGACFHYQEERAIERGILPVLRRATLVQTFGQRHHPCLQPGSITVPPYADPRKMEAHRISPATPRSIFVYFRGLFYDMGNDPEGGYYARGARASVWENFKDNPLFDISTEHPATYYEDMQRAIFCLCPLGWAPWSPRLVEAVVFGCIPVIIADDIVLPFADAIPWGEISVFVAEEDVPRLDTILASVPLDEVIRKQRLLASPAMKQAVLFHQPARPGDAFHQILNGLARKLPHPKGVFLEPGEKGIDWDQGLENDLKPW.

Residues 1–8 (MGTRPCAG) are Cytoplasmic-facing. The chain crosses the membrane as a helical; Signal-anchor for type II membrane protein span at residues 9–29 (VASAVAAAVAVLLLAVSCFAA). Residues 30–422 (AATTTQKHGR…QGLENDLKPW (393 aa)) lie on the Lumenal side of the membrane. Residue N149 is glycosylated (N-linked (GlcNAc...) asparagine).

Belongs to the glycosyltransferase 47 family.

The protein localises to the golgi apparatus membrane. Functionally, involved in the synthesis of glucuronoxylan hemicellulose in secondary cell walls. In Oryza sativa subsp. japonica (Rice), this protein is Probable glucuronosyltransferase Os01g0926400.